The primary structure comprises 984 residues: Translation initiation factor IF-2 (984 aa).

The segment at 32–402 (PAKNATSTLT…TQPQRAAKRK (371 aa)) is disordered. The segment covering 89-123 (PAETEAQASPAQPEAKAAAPAAEAEEAPAAKPAPA) has biased composition (low complexity). Over residues 126–136 (RKAEARTEAPR) the composition is skewed to basic and acidic residues. Low complexity-rich tracts occupy residues 154-172 (APETAAPAQPAPEAQSAAP) and 187-197 (AETTESAPAEP). Residues 198-220 (AAEKAPAEKRRYEVSMEPEKDSV) are compositionally biased toward basic and acidic residues. Over residues 255–270 (RPDPAAVQAQAAAAAQ) the composition is skewed to low complexity. The span at 271 to 283 (AREERAERPDRGP) shows a compositional bias: basic and acidic residues. Positions 308 to 334 (GRPAPRSGAPRPGGARPAAGFGQPAQA) are enriched in low complexity. One can recognise a tr-type G domain in the interval 482 to 651 (PRPPVVTIMG…ALQAEVLELK (170 aa)). Residues 491–498 (GHVDHGKT) are G1. 491–498 (GHVDHGKT) provides a ligand contact to GTP. The segment at 516-520 (GITQH) is G2. A G3 region spans residues 537–540 (DTPG). Residues 537-541 (DTPGH) and 591-594 (NKID) each bind GTP. A G4 region spans residues 591 to 594 (NKID). The interval 627 to 629 (SAK) is G5.

Belongs to the TRAFAC class translation factor GTPase superfamily. Classic translation factor GTPase family. IF-2 subfamily.

Its subcellular location is the cytoplasm. One of the essential components for the initiation of protein synthesis. Protects formylmethionyl-tRNA from spontaneous hydrolysis and promotes its binding to the 30S ribosomal subunits. Also involved in the hydrolysis of GTP during the formation of the 70S ribosomal complex. The polypeptide is Translation initiation factor IF-2 (Oleidesulfovibrio alaskensis (strain ATCC BAA-1058 / DSM 17464 / G20) (Desulfovibrio alaskensis)).